We begin with the raw amino-acid sequence, 58 residues long: Birtoxin (58 aa).

The region spanning 3 to 58 is the LCN-type CS-alpha/beta domain; the sequence is VPGNYPLDKDGNTYKCFLLGGNEECLNVCKLHGVQYGYCYASKCWCEYLEDDKDSV. 3 disulfides stabilise this stretch: cysteine 18–cysteine 41, cysteine 27–cysteine 46, and cysteine 31–cysteine 48.

As to expression, expressed by the venom gland.

Its subcellular location is the secreted. Functionally, beta toxins bind voltage-independently at site-4 of sodium channels (Nav) and shift the voltage of activation toward more negative potentials thereby affecting sodium channel activation and promoting spontaneous and repetitive firing. Moderately toxic, but very high abundant. Does not target reptilian channels. Does not produce effect when administered to blowfly and cabbage looper larvae. In mice, produces convulsions, tremors, increased ventilation and, subsequently, death. The polypeptide is Birtoxin (Parabuthus transvaalicus (Transvaal thick-tailed scorpion)).